A 700-amino-acid chain; its full sequence is Beta-galactosidase Bga (700 aa).

Residue Arg-103 coordinates substrate. Position 107 (Cys-107) interacts with Zn(2+). Asn-141 lines the substrate pocket. Glu-142 (proton donor) is an active-site residue. Zn(2+) is bound by residues Cys-151, Cys-153, and Cys-156. Glu-312 serves as the catalytic Nucleophile. Substrate-binding positions include Trp-320 and 360-363 (EQYH). The span at 648–658 (DPESLAVDDTD) shows a compositional bias: acidic residues. The tract at residues 648-674 (DPESLAVDDTDRDGFDPMADDDKDSSA) is disordered.

The protein belongs to the glycosyl hydrolase 42 family.

It catalyses the reaction Hydrolysis of terminal non-reducing beta-D-galactose residues in beta-D-galactosides.. Its activity is regulated as follows. Requires 4 M NaCl or KCl for maximal activity. In terms of biological role, cleaves o-nitrophenyl-beta-D-galactopyranoside (ONPG) in vitro. This chain is Beta-galactosidase Bga, found in Halorubrum lacusprofundi (strain ATCC 49239 / DSM 5036 / JCM 8891 / ACAM 34).